Consider the following 345-residue polypeptide: Anthranilate phosphoribosyltransferase (345 aa).

5-phospho-alpha-D-ribose 1-diphosphate is bound by residues G87, G90–D91, T95, N97–T100, K115–S123, and S127. G87 serves as a coordination point for anthranilate. S99 serves as a coordination point for Mg(2+). Position 118 (N118) interacts with anthranilate. Anthranilate is bound at residue R173. D232 and E233 together coordinate Mg(2+).

The protein belongs to the anthranilate phosphoribosyltransferase family. In terms of assembly, homodimer. Mg(2+) serves as cofactor.

It catalyses the reaction N-(5-phospho-beta-D-ribosyl)anthranilate + diphosphate = 5-phospho-alpha-D-ribose 1-diphosphate + anthranilate. The protein operates within amino-acid biosynthesis; L-tryptophan biosynthesis; L-tryptophan from chorismate: step 2/5. Its function is as follows. Catalyzes the transfer of the phosphoribosyl group of 5-phosphorylribose-1-pyrophosphate (PRPP) to anthranilate to yield N-(5'-phosphoribosyl)-anthranilate (PRA). This is Anthranilate phosphoribosyltransferase from Aeropyrum pernix (strain ATCC 700893 / DSM 11879 / JCM 9820 / NBRC 100138 / K1).